We begin with the raw amino-acid sequence, 469 residues long: Argininosuccinate lyase (469 aa).

This sequence belongs to the lyase 1 family. Argininosuccinate lyase subfamily.

The protein localises to the cytoplasm. It catalyses the reaction 2-(N(omega)-L-arginino)succinate = fumarate + L-arginine. The protein operates within amino-acid biosynthesis; L-arginine biosynthesis; L-arginine from L-ornithine and carbamoyl phosphate: step 3/3. The protein is Argininosuccinate lyase of Mycolicibacterium smegmatis (strain ATCC 700084 / mc(2)155) (Mycobacterium smegmatis).